The sequence spans 755 residues: Proprotein convertase subtilisin/kexin type 4 (755 aa).

Residues 1–25 (MRPAPIALWLRLVLALALVRPRAVG) form the signal peptide. Positions 26–113 (WAPVRAPIYV…QQTLQRRVKR (88 aa)) are excised as a propeptide. Residues 126 to 440 (QWYMNSEAQP…YGLLDAGLLV (315 aa)) enclose the Peptidase S8 domain. Residues Asp-158, His-199, and Ser-373 each act as charge relay system in the active site. A P/Homo B domain is found at 449–581 (TQPQRKCAVR…TLLLYGTAED (133 aa)). Asn-475 and Asn-629 each carry an N-linked (GlcNAc...) asparagine glycan. The chain crosses the membrane as a helical span at residues 709-729 (AMVLSLLAVTLGGPVLCGMSM).

This sequence belongs to the peptidase S8 family. Furin subfamily. In terms of assembly, the proPCSK4 form interacts with HSPA5; the interaction takes place at the endoplasmic reticulum. In terms of processing, N-glycosylated. Synthesized in the endoplasmic reticulum as a zymogen, is matured by autocatalytic cleavage between the prodomain and the catalytic domain. In terms of tissue distribution, placenta.

It localises to the membrane. Its subcellular location is the cytoplasmic vesicle. The protein localises to the secretory vesicle. It is found in the acrosome membrane. Functionally, proprotein convertase involved in the processing of hormone and other protein precursors at sites comprised of pairs of basic amino acid residues. In males, important for ADAM2 processing as well as other acrosomal proteins with roles in fertilization and critical for normal fertilization events such as sperm capacitation, acrosome reaction and binding of sperm to zona pellucida. Also plays a role in female fertility, involved in the regulation of trophoblast migration and placental development, may be through the proteolytical processing and activation of proteins such as IGF2. May also participate in folliculogenesis in the ovaries. The sequence is that of Proprotein convertase subtilisin/kexin type 4 from Homo sapiens (Human).